The sequence spans 128 residues: Glycine cleavage system H protein (128 aa).

Residues 25 to 107 (IITVGITHHA…YGAGWFFKLK (83 aa)) form the Lipoyl-binding domain. At K66 the chain carries N6-lipoyllysine.

Belongs to the GcvH family. In terms of assembly, the glycine cleavage system is composed of four proteins: P, T, L and H. Requires (R)-lipoate as cofactor.

In terms of biological role, the glycine cleavage system catalyzes the degradation of glycine. The H protein shuttles the methylamine group of glycine from the P protein to the T protein. The protein is Glycine cleavage system H protein of Neisseria meningitidis serogroup A / serotype 4A (strain DSM 15465 / Z2491).